The following is a 244-amino-acid chain: Triosephosphate isomerase (244 aa).

Substrate is bound at residue Asn-9–Lys-11. His-93 acts as the Electrophile in catalysis. Glu-160 serves as the catalytic Proton acceptor. Residues Gly-166 and Ser-206 each coordinate substrate.

It belongs to the triosephosphate isomerase family. Homodimer.

It localises to the cytoplasm. The catalysed reaction is D-glyceraldehyde 3-phosphate = dihydroxyacetone phosphate. It participates in carbohydrate biosynthesis; gluconeogenesis. The protein operates within carbohydrate degradation; glycolysis; D-glyceraldehyde 3-phosphate from glycerone phosphate: step 1/1. Involved in the gluconeogenesis. Catalyzes stereospecifically the conversion of dihydroxyacetone phosphate (DHAP) to D-glyceraldehyde-3-phosphate (G3P). This Mycoplasma pneumoniae (strain ATCC 29342 / M129 / Subtype 1) (Mycoplasmoides pneumoniae) protein is Triosephosphate isomerase.